The sequence spans 237 residues: Phosphoribosylaminoimidazole-succinocarboxamide synthase (237 aa).

The protein belongs to the SAICAR synthetase family.

It carries out the reaction 5-amino-1-(5-phospho-D-ribosyl)imidazole-4-carboxylate + L-aspartate + ATP = (2S)-2-[5-amino-1-(5-phospho-beta-D-ribosyl)imidazole-4-carboxamido]succinate + ADP + phosphate + 2 H(+). The protein operates within purine metabolism; IMP biosynthesis via de novo pathway; 5-amino-1-(5-phospho-D-ribosyl)imidazole-4-carboxamide from 5-amino-1-(5-phospho-D-ribosyl)imidazole-4-carboxylate: step 1/2. The chain is Phosphoribosylaminoimidazole-succinocarboxamide synthase from Listeria monocytogenes serovar 1/2a (strain ATCC BAA-679 / EGD-e).